Consider the following 145-residue polypeptide: Transcription antitermination protein NusB (145 aa).

It belongs to the NusB family.

Functionally, involved in transcription antitermination. Required for transcription of ribosomal RNA (rRNA) genes. Binds specifically to the boxA antiterminator sequence of the ribosomal RNA (rrn) operons. The protein is Transcription antitermination protein NusB of Geotalea daltonii (strain DSM 22248 / JCM 15807 / FRC-32) (Geobacter daltonii).